The following is a 133-amino-acid chain: Arsenate reductase 1 (133 aa).

Residues Cys-10, Cys-82, and Cys-89 each act as nucleophile in the active site. Intrachain disulfides connect Cys-10–Cys-82 and Cys-82–Cys-89.

The protein belongs to the low molecular weight phosphotyrosine protein phosphatase family. Thioredoxin-coupled ArsC subfamily.

It localises to the cytoplasm. The catalysed reaction is arsenate + [thioredoxin]-dithiol + H(+) = arsenite + [thioredoxin]-disulfide + H2O. Catalyzes the reduction of arsenate [As(V)] to arsenite [As(III)]. The polypeptide is Arsenate reductase 1 (Staphylococcus haemolyticus (strain JCSC1435)).